Reading from the N-terminus, the 207-residue chain is Holliday junction branch migration complex subunit RuvA (207 aa).

The domain I stretch occupies residues 1–64 (MIGLINGQVQ…EDAQLLYGFI (64 aa)). Residues 65–143 (DRKERDVFRQ…NIEVDSSHLE (79 aa)) are domain II. The flexible linker stretch occupies residues 144 to 152 (FAMQPAPIS). The tract at residues 153–207 (AEGSIIAEVEGALISLGYKEREAQQAIKAAKSNGETFADTQSLLKATLQQFQSFK) is domain III.

Belongs to the RuvA family. In terms of assembly, homotetramer. Forms an RuvA(8)-RuvB(12)-Holliday junction (HJ) complex. HJ DNA is sandwiched between 2 RuvA tetramers; dsDNA enters through RuvA and exits via RuvB. An RuvB hexamer assembles on each DNA strand where it exits the tetramer. Each RuvB hexamer is contacted by two RuvA subunits (via domain III) on 2 adjacent RuvB subunits; this complex drives branch migration. In the full resolvosome a probable DNA-RuvA(4)-RuvB(12)-RuvC(2) complex forms which resolves the HJ.

The protein localises to the cytoplasm. The RuvA-RuvB-RuvC complex processes Holliday junction (HJ) DNA during genetic recombination and DNA repair, while the RuvA-RuvB complex plays an important role in the rescue of blocked DNA replication forks via replication fork reversal (RFR). RuvA specifically binds to HJ cruciform DNA, conferring on it an open structure. The RuvB hexamer acts as an ATP-dependent pump, pulling dsDNA into and through the RuvAB complex. HJ branch migration allows RuvC to scan DNA until it finds its consensus sequence, where it cleaves and resolves the cruciform DNA. In Psychrobacter cryohalolentis (strain ATCC BAA-1226 / DSM 17306 / VKM B-2378 / K5), this protein is Holliday junction branch migration complex subunit RuvA.